A 453-amino-acid chain; its full sequence is DNA repair protein RadA (453 aa).

Residues 10 to 27 form a C4-type zinc finger; sequence CQECGYQSPKYLGRCPNC. Residue 95–102 participates in ATP binding; sequence GDPGIGKS. A RadA KNRFG motif motif is present at residues 251 to 255; it reads KNRFG. The tract at residues 350-453 is lon-protease-like; it reads DAYLKSAGGV…VGQVLKAVFS (104 aa).

The protein belongs to the RecA family. RadA subfamily.

DNA-dependent ATPase involved in processing of recombination intermediates, plays a role in repairing DNA breaks. Stimulates the branch migration of RecA-mediated strand transfer reactions, allowing the 3' invading strand to extend heteroduplex DNA faster. Binds ssDNA in the presence of ADP but not other nucleotides, has ATPase activity that is stimulated by ssDNA and various branched DNA structures, but inhibited by SSB. Does not have RecA's homology-searching function. In Streptococcus pyogenes serotype M6 (strain ATCC BAA-946 / MGAS10394), this protein is DNA repair protein RadA.